Reading from the N-terminus, the 386-residue chain is 5-hydroxytryptamine receptor 1B (386 aa).

Positions 1 to 25 (MEEPGARCAPPPPAGSQTQTPSSNL) are disordered. Over 1–42 (MEEPGARCAPPPPAGSQTQTPSSNLSHNCSADSYIYQDSIAL) the chain is Extracellular. The segment covering 16 to 25 (SQTQTPSSNL) has biased composition (polar residues). N-linked (GlcNAc...) asparagine glycosylation is found at N24 and N28. The chain crosses the membrane as a helical span at residues 43 to 68 (PWKVLLVALLALITLATTLSNAFVIA). Residues 69–82 (TVYRTRKLHTPANY) are Cytoplasmic-facing. Residues 83–107 (LIASLAVTDLLVSILVMPISTMYTV) form a helical membrane-spanning segment. Residues 108 to 115 (TGRWTLGQ) are Extracellular-facing. A helical transmembrane segment spans residues 116 to 141 (VVCDFWLSSDITCCTASIMHLCVIAL). A disulfide bond links C118 and C195. Positions 125 and 130 each coordinate ergotamine. The short motif at 142 to 144 (DRY) is the DRY motif; important for ligand-induced conformation changes and signaling element. Residues 142–161 (DRYWAITDAVEYSAKRTPRR) are Cytoplasmic-facing. A helical transmembrane segment spans residues 162 to 180 (AAVMIALVWVFSISISLPR). Residues 181 to 201 (FFWRQAKAEEEVLDCLVNTDH) lie on the Extracellular side of the membrane. Ergotamine is bound at residue V197. Residues 202 to 225 (VLYTVYSTVGAFYLPTLLLIALYG) form a helical membrane-spanning segment. At 226-311 (RIYVEARSRI…AARERKATKT (86 aa)) the chain is on the cytoplasmic side. A disordered region spans residues 253–272 (ISDSPGSTSSVTSINSRVPD). The span at 254–268 (SDSPGSTSSVTSINS) shows a compositional bias: low complexity. A helical transmembrane segment spans residues 312-333 (LGIILGAFIVCWLPFFIISLVM). Topologically, residues 334-343 (PICKDACWFH) are extracellular. The chain crosses the membrane as a helical span at residues 344–366 (MAIFDFFNWLGYLNSLINPIIYT). The NPxxY motif; important for ligand-induced conformation changes and signaling signature appears at 361–365 (NPIIY). Topologically, residues 367–386 (MPNEDFKQAFHKLIRFKCTG) are cytoplasmic. C384 is lipidated: S-palmitoyl cysteine.

This sequence belongs to the G-protein coupled receptor 1 family. Homodimer. Heterodimer with HTR1D. In terms of processing, phosphorylated. Desensitization of the receptor may be mediated by its phosphorylation. Palmitoylated.

It is found in the cell membrane. Its function is as follows. G-protein coupled receptor for 5-hydroxytryptamine (serotonin). Also functions as a receptor for ergot alkaloid derivatives, various anxiolytic and antidepressant drugs and other psychoactive substances, such as lysergic acid diethylamide (LSD). Ligand binding causes a conformation change that triggers signaling via guanine nucleotide-binding proteins (G proteins) and modulates the activity of downstream effectors, such as adenylate cyclase. HTR1B is coupled to G(i)/G(o) G alpha proteins and mediates inhibitory neurotransmission by inhibiting adenylate cyclase activity. Arrestin family members inhibit signaling via G proteins and mediate activation of alternative signaling pathways. Regulates the release of 5-hydroxytryptamine, dopamine and acetylcholine in the brain, and thereby affects neural activity, nociceptive processing, pain perception, mood and behavior. Besides, plays a role in vasoconstriction of cerebral arteries. This is 5-hydroxytryptamine receptor 1B (HTR1B) from Spalax ehrenbergi (Middle East blind mole rat).